The chain runs to 77 residues: Cell division topological specificity factor (77 aa).

This sequence belongs to the MinE family.

In terms of biological role, prevents the cell division inhibition by proteins MinC and MinD at internal division sites while permitting inhibition at polar sites. This ensures cell division at the proper site by restricting the formation of a division septum at the midpoint of the long axis of the cell. The chain is Cell division topological specificity factor from Helicobacter pylori (strain P12).